A 94-amino-acid polypeptide reads, in one-letter code: Small ribosomal subunit protein uS17 (94 aa).

The protein belongs to the universal ribosomal protein uS17 family. As to quaternary structure, part of the 30S ribosomal subunit.

Its function is as follows. One of the primary rRNA binding proteins, it binds specifically to the 5'-end of 16S ribosomal RNA. The chain is Small ribosomal subunit protein uS17 from Streptomyces avermitilis (strain ATCC 31267 / DSM 46492 / JCM 5070 / NBRC 14893 / NCIMB 12804 / NRRL 8165 / MA-4680).